The chain runs to 301 residues: Methionyl-tRNA formyltransferase (301 aa).

110–113 (SLLP) contacts (6S)-5,6,7,8-tetrahydrofolate.

Belongs to the Fmt family.

The enzyme catalyses L-methionyl-tRNA(fMet) + (6R)-10-formyltetrahydrofolate = N-formyl-L-methionyl-tRNA(fMet) + (6S)-5,6,7,8-tetrahydrofolate + H(+). Its function is as follows. Attaches a formyl group to the free amino group of methionyl-tRNA(fMet). The formyl group appears to play a dual role in the initiator identity of N-formylmethionyl-tRNA by promoting its recognition by IF2 and preventing the misappropriation of this tRNA by the elongation apparatus. In Anaplasma phagocytophilum (strain HZ), this protein is Methionyl-tRNA formyltransferase.